Consider the following 329-residue polypeptide: Ketol-acid reductoisomerase (NADP(+)) (329 aa).

One can recognise a KARI N-terminal Rossmann domain in the interval 2 to 182; sequence TQLFYDTDAD…GGTRAGILET (181 aa). NADP(+) is bound by residues 25-28, Ser-51, Ser-53, and 83-86; these read YGSQ and DEFQ. Residue His-108 is part of the active site. Residue Gly-134 coordinates NADP(+). The 146-residue stretch at 183 to 328 folds into the KARI C-terminal knotted domain; that stretch reads NFKEETETDL…KSLRSMFSWL (146 aa). The Mg(2+) site is built by Asp-191, Glu-195, Glu-227, and Glu-231. Ser-252 contributes to the substrate binding site.

The protein belongs to the ketol-acid reductoisomerase family. It depends on Mg(2+) as a cofactor.

The enzyme catalyses (2R)-2,3-dihydroxy-3-methylbutanoate + NADP(+) = (2S)-2-acetolactate + NADPH + H(+). It carries out the reaction (2R,3R)-2,3-dihydroxy-3-methylpentanoate + NADP(+) = (S)-2-ethyl-2-hydroxy-3-oxobutanoate + NADPH + H(+). It participates in amino-acid biosynthesis; L-isoleucine biosynthesis; L-isoleucine from 2-oxobutanoate: step 2/4. It functions in the pathway amino-acid biosynthesis; L-valine biosynthesis; L-valine from pyruvate: step 2/4. In terms of biological role, involved in the biosynthesis of branched-chain amino acids (BCAA). Catalyzes an alkyl-migration followed by a ketol-acid reduction of (S)-2-acetolactate (S2AL) to yield (R)-2,3-dihydroxy-isovalerate. In the isomerase reaction, S2AL is rearranged via a Mg-dependent methyl migration to produce 3-hydroxy-3-methyl-2-ketobutyrate (HMKB). In the reductase reaction, this 2-ketoacid undergoes a metal-dependent reduction by NADPH to yield (R)-2,3-dihydroxy-isovalerate. In Prochlorococcus marinus (strain MIT 9301), this protein is Ketol-acid reductoisomerase (NADP(+)).